The following is a 947-amino-acid chain: Vacuolar membrane protease (947 aa).

Residues 1–15 lie on the Cytoplasmic side of the membrane; the sequence is MRFKALLRAIFRFRK. A helical membrane pass occupies residues 16 to 36; that stretch reads TNFSILLIITYAIIIALLVFD. Residues 37–358 lie on the Vacuolar side of the membrane; it reads RSRYKLDLPN…GLFFVVVDTK (322 aa). N46, N92, N108, and N121 each carry an N-linked (GlcNAc...) asparagine glycan. Residues H156 and D168 each coordinate Zn(2+). E200 serves as the catalytic Proton acceptor. Zn(2+) contacts are provided by E201, E226, and H300. N-linked (GlcNAc...) asparagine glycosylation is present at N319. The helical transmembrane segment at 359-379 threads the bilayer; that stretch reads HLFYADIFMLIVGPILLMMKA. Over 380 to 391 the chain is Cytoplasmic; sequence HLDKRRRLERSR. The chain crosses the membrane as a helical span at residues 392-412; that stretch reads LVQLRLLLSLGLSVVFLLLLT. The Vacuolar portion of the chain corresponds to 413–428; it reads KSLNSFNPFVYSADYR. The chain crosses the membrane as a helical span at residues 429-449; the sequence is TPLTGLFLLFVTVNYLIVTLA. At 450-458 the chain is on the cytoplasmic side; it reads ERLNPTESY. A helical membrane pass occupies residues 459–479; that stretch reads KTVAINQIFIIAWLMQLYITL. The Vacuolar portion of the chain corresponds to 480 to 489; that stretch reads RMAKSDFTLT. Residues 490–510 form a helical membrane-spanning segment; it reads GTYPLSIFSGCLIVALSLGLF. Topologically, residues 511–601 are cytoplasmic; the sequence is GTKNKAVNDA…DKNSDFSKHY (91 aa). Polar residues-rich tracts occupy residues 522–531 and 546–567; these read NSSVRYASSQ and NINQ…TDLH. The interval 522–573 is disordered; it reads NSSVRYASSQNDEDNPLPSQDRGENINQVRDTGNQEVTSNTNTDLHSNAEEV. The helical transmembrane segment at 602 to 622 threads the bilayer; it reads NWIVQFLCIVPISSFIFLFSL. Topologically, residues 623–641 are vacuolar; the sequence is DYTLDAIHKMVQETTDDVQ. Residues 642–662 form a helical membrane-spanning segment; the sequence is LICIIITIGVILLALPILPFI. Topologically, residues 663–669 are cytoplasmic; sequence SKLNYQS. The chain crosses the membrane as a helical span at residues 670–690; the sequence is SVIIAIIGVLLFGKSLVMQPF. Topologically, residues 691-947 are vacuolar; that stretch reads SEIAPLKVRF…LVVIKDKIQL (257 aa). N742, N784, N801, and N833 each carry an N-linked (GlcNAc...) asparagine glycan.

It belongs to the peptidase M28 family. It depends on Zn(2+) as a cofactor.

It is found in the vacuole membrane. In terms of biological role, may be involved in vacuolar sorting and osmoregulation. This Candida glabrata (strain ATCC 2001 / BCRC 20586 / JCM 3761 / NBRC 0622 / NRRL Y-65 / CBS 138) (Yeast) protein is Vacuolar membrane protease.